The primary structure comprises 414 residues: Probable solanesyl-diphosphate synthase 3, chloroplastic (414 aa).

Low complexity predominate over residues 1–23; it reads MAAPSSLASSSHLSRRATAAASP. Residues 1–36 are disordered; the sequence is MAAPSSLASSSHLSRRATAAASPSIPPPSPPPPPQR. Residues 1 to 72 constitute a chloroplast transit peptide; the sequence is MAAPSSLASS…KPGVAAVDVP (72 aa). A compositionally biased stretch (pro residues) spans 24-35; it reads SIPPPSPPPPPQ. The isopentenyl diphosphate site is built by Lys-134, Arg-137, and His-172. Residues Asp-179 and Asp-183 each contribute to the Mg(2+) site. An an all-trans-polyprenyl diphosphate-binding site is contributed by Arg-188. Position 189 (Arg-189) interacts with isopentenyl diphosphate. Positions 265, 266, 303, and 320 each coordinate an all-trans-polyprenyl diphosphate.

The protein belongs to the FPP/GGPP synthase family. Homodimer. The cofactor is Mg(2+).

It is found in the plastid. Its subcellular location is the chloroplast. The catalysed reaction is 7 isopentenyl diphosphate + (2E)-geranyl diphosphate = all-trans-nonaprenyl diphosphate + 7 diphosphate. Involved in providing solanesyl diphosphate for plastoquinone-9 (PQ-9) formation. This chain is Probable solanesyl-diphosphate synthase 3, chloroplastic, found in Oryza sativa subsp. japonica (Rice).